We begin with the raw amino-acid sequence, 198 residues long: Protein hunchback (198 aa).

2 disordered regions span residues 16–116 (SHHH…NPMQ) and 158–198 (LTPP…KYMA). Positions 17 to 31 (HHHHHHHAHHSHHQH) are enriched in basic residues. 2 stretches are compositionally biased toward low complexity: residues 35-46 (SNSNSNASSPHQ) and 68-83 (QQQQ…QQQQ). The span at 95 to 105 (PSPSNNDQNSP) shows a compositional bias: polar residues. Residues 179 to 198 (EPEKEHDLMSNSSEDMKYMA) show a composition bias toward basic and acidic residues.

This sequence belongs to the hunchback C2H2-type zinc-finger protein family.

Its subcellular location is the nucleus. Gap class segmentation protein that controls development of head structures. This chain is Protein hunchback (hb), found in Drosophila cyrtoloma (Fruit fly).